The following is a 418-amino-acid chain: AP-3 complex subunit mu-1 (418 aa).

The MHD domain occupies 176-417 (NNEAYFDVVE…VTKAGKFQVR (242 aa)).

This sequence belongs to the adaptor complexes medium subunit family. In terms of assembly, adaptor protein complex 3 (AP-3) is a heterotetramer composed of two large adaptins (delta-type subunit AP3D1 and beta-type subunit AP3B1 or AP3B2), a medium adaptin (mu-type subunit AP3M1 or AP3M2) and a small adaptin (sigma-type subunit APS1 or AP3S2). Interacts with AGAP1. AP-3 associates with the BLOC-1 complex. As to quaternary structure, (Microbial infection) Interacts with human respiratory virus (HRSV) matrix protein; this interaction plays an essential role in trafficking the matrix protein in host cells.

The protein resides in the golgi apparatus. It is found in the cytoplasmic vesicle membrane. Functionally, part of the AP-3 complex, an adaptor-related complex which is not clathrin-associated. The complex is associated with the Golgi region as well as more peripheral structures. It facilitates the budding of vesicles from the Golgi membrane and may be directly involved in trafficking to lysosomes. In concert with the BLOC-1 complex, AP-3 is required to target cargos into vesicles assembled at cell bodies for delivery into neurites and nerve terminals. This Homo sapiens (Human) protein is AP-3 complex subunit mu-1 (AP3M1).